Here is a 312-residue protein sequence, read N- to C-terminus: MKVAVLGAAGGIGQALALLLKTQLPSGSELSLYDIAPVTPGVAVDLSHIPTAVKIKGFSGEDATPALEGANVVLISAGVARKPGMDRSDLFNVNAGIVKNLVQQVAKTCPKACIGIITNPVNTTVAIAAEVLKKAGVYDKNKLFGVTTLDIIRSNTFVAELKGKQPGEVEVPVIGGHSGVTILPLLSQVPGVSFTEQEVADLTKRIQNAGTEVVEAKAGGGSATLSMGQAAARFGLSLVRALQGEQGVVECAYVEGDGQYARFFSQPLLLGKNGVEERKSIGTLSAFEKNALEGMLDTLKKDIALGEEFVNK.

NAD(+) contacts are provided by residues 7 to 13 and Asp34; that span reads GAAGGIG. The substrate site is built by Arg81 and Arg87. Residues Asn94 and 117-119 contribute to the NAD(+) site; that span reads ITN. Residues Asn119 and Arg153 each contribute to the substrate site. The active-site Proton acceptor is His177. Residue Met227 participates in NAD(+) binding.

It belongs to the LDH/MDH superfamily. MDH type 1 family. Homodimer.

It carries out the reaction (S)-malate + NAD(+) = oxaloacetate + NADH + H(+). In terms of biological role, catalyzes the reversible oxidation of malate to oxaloacetate. This is Malate dehydrogenase from Escherichia coli O17:K52:H18 (strain UMN026 / ExPEC).